The sequence spans 185 residues: Protein DP71L (185 aa).

Positions 1–15 (MSRRNKKRSRRRRKK) are enriched in basic residues. Residues 1-38 (MSRRNKKRSRRRRKKPLNDIQPGPSKSSAQDEPIKSVS) form a disordered region. Important for host CHOP inhibition stretches follow at residues 126 to 128 (VHF) and 170 to 174 (LSTVF).

Belongs to the asfivirus DP71L family. In terms of assembly, interacts (via C-terminus) with host PPP1CB.

Interacts with the host phosphatase PP1 catalytic subunit (PPP1CB) and recruits it to dephosphorylate EIF2S1/eIF2alpha and therefore restores the host translation that has been shut-down by the host. Also inhibits the EIF2S1/eIF2alpha-ATF4-DDIT3/CHOP pathway. This is Protein DP71L from African swine fever virus (isolate Pig/Kenya/KEN-50/1950) (ASFV).